A 282-amino-acid polypeptide reads, in one-letter code: Lipoyl synthase (282 aa).

Residues Cys-37, Cys-42, Cys-48, Cys-63, Cys-67, Cys-70, and Ser-275 each coordinate [4Fe-4S] cluster. The region spanning 49–264 is the Radical SAM core domain; that stretch reads WSRGTATFMI…RLVGIEKGFR (216 aa).

This sequence belongs to the radical SAM superfamily. Lipoyl synthase family. The cofactor is [4Fe-4S] cluster.

It localises to the cytoplasm. The enzyme catalyses [[Fe-S] cluster scaffold protein carrying a second [4Fe-4S](2+) cluster] + N(6)-octanoyl-L-lysyl-[protein] + 2 oxidized [2Fe-2S]-[ferredoxin] + 2 S-adenosyl-L-methionine + 4 H(+) = [[Fe-S] cluster scaffold protein] + N(6)-[(R)-dihydrolipoyl]-L-lysyl-[protein] + 4 Fe(3+) + 2 hydrogen sulfide + 2 5'-deoxyadenosine + 2 L-methionine + 2 reduced [2Fe-2S]-[ferredoxin]. It functions in the pathway protein modification; protein lipoylation via endogenous pathway; protein N(6)-(lipoyl)lysine from octanoyl-[acyl-carrier-protein]: step 2/2. Its function is as follows. Catalyzes the radical-mediated insertion of two sulfur atoms into the C-6 and C-8 positions of the octanoyl moiety bound to the lipoyl domains of lipoate-dependent enzymes, thereby converting the octanoylated domains into lipoylated derivatives. This is Lipoyl synthase from Porphyromonas gingivalis (strain ATCC 33277 / DSM 20709 / CIP 103683 / JCM 12257 / NCTC 11834 / 2561).